We begin with the raw amino-acid sequence, 200 residues long: Mediator of RNA polymerase II transcription subunit 29 (200 aa).

Low complexity-rich tracts occupy residues 1–20 and 36–48; these read MAASQQQASATTSTASVSGP and AQLVGPAQSGLLQ. The tract at residues 1–48 is disordered; the sequence is MAASQQQASATTSTASVSGPGSAGGSGPQQQPQPPAQLVGPAQSGLLQ. An N-acetylalanine modification is found at Ala2.

Belongs to the Mediator complex subunit 29 family. In terms of assembly, component of the TRAP/SMCC mediator complex. Interacts with MED20/TRFP. Associates with the MED18-MED20 heteromer.

The protein resides in the nucleus. Functionally, component of the mediator complex, a complex that can either repress or activate transcription. Mediator complexes are essential for basal and regulated expression of nearly all RNA polymerase II-dependent genes. They may act as a bridge, conveying regulatory information from enhancers and other control elements to the promoter. In Bos taurus (Bovine), this protein is Mediator of RNA polymerase II transcription subunit 29 (MED29).